We begin with the raw amino-acid sequence, 1099 residues long: Transmembrane protein 132D (1099 aa).

Residues 1-30 (MCPSEMGTLWHHWSPVLISLAALFSKVTEG) form the signal peptide. Residues 31-915 (RGILESIQRF…LMQASKGLSD (885 aa)) are Extracellular-facing. Residue Asn-505 is glycosylated (N-linked (GlcNAc...) asparagine). The tract at residues 797-858 (FGQNDANPNT…LMEGRGTTTD (62 aa)) is disordered. A compositionally biased stretch (low complexity) spans 835–848 (GSQEGQYYGSSSMG). Residues 916–936 (LEIGMYALLGVFCLAILVFLI) form a helical membrane-spanning segment. Residues 937–1099 (NCVTFALKYR…NYMERLHENV (163 aa)) are Cytoplasmic-facing.

The protein belongs to the TMEM132 family. Interacts (via C-terminus) with NCKAP. As to expression, expressed in mature oligodendrocytes. Detected in the brain, lung, pancreas and testis. Highly expressed in mature neurons of the adult nervous system.

It is found in the membrane. In terms of biological role, regulate neuronals morphology via inhibition of the WAVE regulatory complex (WCR), a complex that controls F-actin cytoskeletal dynamics. This is Transmembrane protein 132D from Homo sapiens (Human).